The primary structure comprises 458 residues: Phosphoglucosamine mutase (458 aa).

The active-site Phosphoserine intermediate is Ser-109. Mg(2+) contacts are provided by Ser-109, Asp-251, Asp-253, and Asp-255. Phosphoserine is present on Ser-109.

Belongs to the phosphohexose mutase family. Mg(2+) serves as cofactor. Activated by phosphorylation.

It carries out the reaction alpha-D-glucosamine 1-phosphate = D-glucosamine 6-phosphate. Its function is as follows. Catalyzes the conversion of glucosamine-6-phosphate to glucosamine-1-phosphate. This chain is Phosphoglucosamine mutase, found in Myxococcus xanthus (strain DK1622).